The sequence spans 238 residues: Large ribosomal subunit protein uL2 (238 aa).

Residues 201–238 (PFGGGGRQHPGRPKTVSRNTPPGRKVGSIAARRTGVGH) form a disordered region.

It belongs to the universal ribosomal protein uL2 family. In terms of assembly, part of the 50S ribosomal subunit. Forms a bridge to the 30S subunit in the 70S ribosome.

In terms of biological role, one of the primary rRNA binding proteins. Required for association of the 30S and 50S subunits to form the 70S ribosome, for tRNA binding and peptide bond formation. It has been suggested to have peptidyltransferase activity; this is somewhat controversial. Makes several contacts with the 16S rRNA in the 70S ribosome. In Methanocella arvoryzae (strain DSM 22066 / NBRC 105507 / MRE50), this protein is Large ribosomal subunit protein uL2.